The sequence spans 2157 residues: Genome polyprotein (2157 aa).

The N-myristoyl glycine; by host moiety is linked to residue Gly-2. The Cytoplasmic portion of the chain corresponds to 2-1470; the sequence is GAQVSRQNVG…DLSIANSIIT (1469 aa). The segment at 567–584 is amphipathic alpha-helix; it reads PIEQNPVENYIDEVLNEV. Catalysis depends on for protease 2A activity residues His-875 and Asp-892. Cys-909 and Cys-911 together coordinate Zn(2+). The active-site For protease 2A activity is the Cys-963. Residues Cys-969 and His-971 each coordinate Zn(2+). Residues 1095–1164 are membrane-binding; it reads SDSWLKKFTE…NLRAADNATQ (70 aa). An oligomerization region spans residues 1095-1228; it reads SDSWLKKFTE…PPGTGKSITT (134 aa). The tract at residues 1116–1120 is RNA-binding; the sequence is GNKIS. The SF3 helicase domain maps to 1188-1350; sequence EAKRIKVLYN…YKDAQGKLNV (163 aa). 3 residues coordinate Zn(2+): Cys-1357, Cys-1368, and Cys-1373. The C4-type; degenerate zinc finger occupies 1357–1373; sequence CNVNTKIGNAKCCPFVC. The interval 1400–1407 is RNA-binding; sequence EDKRRRQV. An oligomerization region spans residues 1411–1416; sequence MSAIFQ. Residues 1471 to 1486 lie within the membrane without spanning it; the sequence is IIANIISIAGIIFVIY. The Cytoplasmic segment spans residues 1487 to 2157; sequence KLFCTLQGPY…LLKHEWYEKF (671 aa). Tyr-1496 bears the O-(5'-phospho-RNA)-tyrosine mark. A Peptidase C3 domain is found at 1515-1693; the sequence is GPEEEFGRSI…FSAMLLRSYF (179 aa). Residues His-1554, Glu-1585, and Cys-1661 each act as for protease 3C activity in the active site. A RdRp catalytic domain is found at 1925–2038; the sequence is DCIMAFDYTN…SYKYTLDMEA (114 aa). Residues Asp-1931 and Asp-2024 each contribute to the Mg(2+) site.

The protein belongs to the picornaviruses polyprotein family. In terms of assembly, interacts with capsid protein VP1 and capsid protein VP3 to form heterotrimeric protomers. As to quaternary structure, interacts with capsid protein VP0, and capsid protein VP3 to form heterotrimeric protomers. Five protomers subsequently associate to form pentamers which serve as building blocks for the capsid. Interacts with capsid protein VP2, capsid protein VP3 and capsid protein VP4 following cleavage of capsid protein VP0. Interacts with capsid protein VP1 and capsid protein VP3 in the mature capsid. In terms of assembly, interacts with capsid protein VP0 and capsid protein VP1 to form heterotrimeric protomers. Five protomers subsequently associate to form pentamers which serve as building blocks for the capsid. Interacts with capsid protein VP4 in the mature capsid. Interacts with protein 2C; this interaction may be important for virion morphogenesis. As to quaternary structure, interacts with capsid protein VP1 and capsid protein VP3. Homodimer. In terms of assembly, homohexamer; forms a hexameric ring structure with 6-fold symmetry characteristic of AAA+ ATPases. Interacts (via N-terminus) with host RTN3 (via reticulon domain); this interaction is important for viral replication. Interacts with capsid protein VP3; this interaction may be important for virion morphogenesis. As to quaternary structure, interacts with protein 3CD. Homodimer. Interacts with host GBF1. Interacts (via GOLD domain) with host ACBD3 (via GOLD domain); this interaction allows the formation of a viral protein 3A/ACBD3 heterotetramer with a 2:2 stoichiometry, which will stimulate the recruitment of host PI4KB in order to synthesize PI4P at the viral RNA replication sites. In terms of assembly, interacts with RNA-directed RNA polymerase. As to quaternary structure, interacts with protein 3AB and with RNA-directed RNA polymerase. Interacts with Viral protein genome-linked and with protein 3CD. Mg(2+) is required as a cofactor. Specific enzymatic cleavages in vivo by the viral proteases yield processing intermediates and the mature proteins. In terms of processing, myristoylation is required for the formation of pentamers during virus assembly. Further assembly of 12 pentamers and a molecule of genomic RNA generates the provirion. Post-translationally, during virion maturation, immature virions are rendered infectious following cleavage of VP0 into VP4 and VP2. This maturation seems to be an autocatalytic event triggered by the presence of RNA in the capsid and it is followed by a conformational change infectious virion. Myristoylation is required during RNA encapsidation and formation of the mature virus particle. In terms of processing, VPg is uridylylated by the polymerase into VPg-pUpU. This acts as a nucleotide-peptide primer for the genomic RNA replication.

It localises to the virion. It is found in the host cytoplasm. The protein localises to the host cytoplasmic vesicle membrane. The protein resides in the host nucleus. It catalyses the reaction a ribonucleoside 5'-triphosphate + H2O = a ribonucleoside 5'-diphosphate + phosphate + H(+). The catalysed reaction is Selective cleavage of Tyr-|-Gly bond in the picornavirus polyprotein.. The enzyme catalyses RNA(n) + a ribonucleoside 5'-triphosphate = RNA(n+1) + diphosphate. It carries out the reaction Selective cleavage of Gln-|-Gly bond in the poliovirus polyprotein. In other picornavirus reactions Glu may be substituted for Gln, and Ser or Thr for Gly.. Replication or transcription is subject to high level of random mutations by the nucleotide analog ribavirin. Its function is as follows. Forms an icosahedral capsid of pseudo T=3 symmetry with capsid proteins VP2 and VP3. The capsid is 300 Angstroms in diameter, composed of 60 copies of each capsid protein and enclosing the viral positive strand RNA genome. Capsid protein VP1 mainly forms the vertices of the capsid. Capsid protein VP1 interacts with host cell receptor to provide virion attachment to target host cells. This attachment induces virion internalization. Tyrosine kinases are probably involved in the entry process. After binding to its receptor, the capsid undergoes conformational changes. Capsid protein VP1 N-terminus (that contains an amphipathic alpha-helix) and capsid protein VP4 are externalized. Together, they shape a pore in the host membrane through which viral genome is translocated to host cell cytoplasm. In terms of biological role, forms an icosahedral capsid of pseudo T=3 symmetry with capsid proteins VP2 and VP3. The capsid is 300 Angstroms in diameter, composed of 60 copies of each capsid protein and enclosing the viral positive strand RNA genome. Lies on the inner surface of the capsid shell. After binding to the host receptor, the capsid undergoes conformational changes. Capsid protein VP4 is released, Capsid protein VP1 N-terminus is externalized, and together, they shape a pore in the host membrane through which the viral genome is translocated into the host cell cytoplasm. Functionally, component of immature procapsids, which is cleaved into capsid proteins VP4 and VP2 after maturation. Allows the capsid to remain inactive before the maturation step. Its function is as follows. Cysteine protease that cleaves viral polyprotein and specific host proteins. It is responsible for the autocatalytic cleavage between the P1 and P2 regions, which is the first cleavage occurring in the polyprotein. Also cleaves the host translation initiation factor EIF4G1, in order to shut down the capped cellular mRNA translation. Inhibits the host nucleus-cytoplasm protein and RNA trafficking by cleaving host members of the nuclear pores. Counteracts stress granule formation probably by antagonizing its assembly or promoting its dissassembly. In terms of biological role, plays an essential role in the virus replication cycle by acting as a viroporin. Creates a pore in the host endoplasmic reticulum and as a consequence releases Ca2+ in the cytoplasm of infected cell. In turn, high levels of cytoplasmic calcium may trigger membrane trafficking and transport of viral ER-associated proteins to viroplasms, sites of viral genome replication. Induces and associates with structural rearrangements of intracellular membranes. Displays RNA-binding, nucleotide binding and NTPase activities. May play a role in virion morphogenesis and viral RNA encapsidation by interacting with the capsid protein VP3. Functionally, localizes the viral replication complex to the surface of membranous vesicles. Together with protein 3CD binds the Cis-Active RNA Element (CRE) which is involved in RNA synthesis initiation. Acts as a cofactor to stimulate the activity of 3D polymerase, maybe through a nucleid acid chaperone activity. Its function is as follows. Localizes the viral replication complex to the surface of membranous vesicles. It inhibits host cell endoplasmic reticulum-to-Golgi apparatus transport and causes the disassembly of the Golgi complex, possibly through GBF1 interaction. This would result in depletion of MHC, trail receptors and IFN receptors at the host cell surface. Plays an essential role in viral RNA replication by recruiting ACBD3 and PI4KB at the viral replication sites, thereby allowing the formation of the rearranged membranous structures where viral replication takes place. In terms of biological role, acts as a primer for viral RNA replication and remains covalently bound to viral genomic RNA. VPg is uridylylated prior to priming replication into VPg-pUpU. The oriI viral genomic sequence may act as a template for this. The VPg-pUpU is then used as primer on the genomic RNA poly(A) by the RNA-dependent RNA polymerase to replicate the viral genome. During genome replication, the VPg-RNA linkage is removed by the host TDP2, thereby accelerating replication. During the late stage of the replication cycle, host TDP2 is excluded from sites of viral RNA synthesis and encapsidation, allowing for the generation of progeny virions. Involved in the viral replication complex and viral polypeptide maturation. It exhibits protease activity with a specificity and catalytic efficiency that is different from protease 3C. Protein 3CD lacks polymerase activity. Protein 3CD binds to the 5'UTR of the viral genome. Functionally, replicates the viral genomic RNA on the surface of intracellular membranes. May form linear arrays of subunits that propagate along a strong head-to-tail interaction called interface-I. Covalently attaches UMP to a tyrosine of VPg, which is used to prime RNA synthesis. The positive stranded RNA genome is first replicated at virus induced membranous vesicles, creating a dsRNA genomic replication form. This dsRNA is then used as template to synthesize positive stranded RNA genomes. ss(+)RNA genomes are either translated, replicated or encapsidated. Its function is as follows. Major viral protease that mediates proteolytic processing of the polyprotein. Cleaves host EIF5B, contributing to host translation shutoff. Also cleaves host PABPC1, contributing to host translation shutoff. Cleaves host NLRP1, triggers host N-glycine-mediated degradation of the autoinhibitory NLRP1 N-terminal fragment. This is Genome polyprotein from Homo sapiens (Human).